The following is a 312-amino-acid chain: Taste receptor type 2 member 103 (312 aa).

Residues 1–6 (MVLTIR) lie on the Extracellular side of the membrane. Residues 7–27 (AILWVTLITIISLEFIIGILG) form a helical membrane-spanning segment. Residues 28 to 61 (NVFIALVNIIDWVKRGKISAVDKTYMALAISRTA) lie on the Cytoplasmic side of the membrane. Residues 62-82 (FLLSLITGFLVSLLDPALLGM) form a helical membrane-spanning segment. At 83 to 92 (RTMVRLLTIS) the chain is on the extracellular side. Residues 93 to 113 (WMVTNHFSVWFATCLSIFYFL) traverse the membrane as a helical segment. Residues 114-132 (KIANFSNSIFLVLKWEAKK) lie on the Cytoplasmic side of the membrane. A helical transmembrane segment spans residues 133-153 (VVSVTLVVSVIILIMNIIVIN). Over 154–185 (KFTDRLQVNTLQNCSTSNTLKDYGLFLFISTG) the chain is Extracellular. Asparagine 166 carries N-linked (GlcNAc...) asparagine glycosylation. Residues 186–206 (FTLTPFAVSLTMFLLLIFSLW) form a helical membrane-spanning segment. Residues 207–229 (RHLKNMCHSATGSRDVSTVAHIK) lie on the Cytoplasmic side of the membrane. A helical transmembrane segment spans residues 230–250 (GLQTVVTFLLLYTAFVMSLLS). Topologically, residues 251–264 (ESLNINIQHTNLLS) are extracellular. The chain crosses the membrane as a helical span at residues 265-285 (HFLRSIGVAFPTGHSCVLILG). The Cytoplasmic portion of the chain corresponds to 286–312 (NSKLRQASLSVILWLRYKYKHIENWGP).

The protein belongs to the G-protein coupled receptor T2R family. As to expression, expressed in subsets of taste receptor cells of the tongue and palate epithelium and exclusively in gustducin-positive cells. Expressed in 15% taste bud cells in circumvallate and foliate papillae but only in 2% in fungiform papillae.

The protein resides in the membrane. Gustducin-coupled receptor implicated in the perception of bitter compounds in the oral cavity and the gastrointestinal tract. Signals through PLCB2 and the calcium-regulated cation channel TRPM5. The protein is Taste receptor type 2 member 103 (Tas2r103) of Mus musculus (Mouse).